A 255-amino-acid polypeptide reads, in one-letter code: 5-oxoprolinase subunit A 2 (255 aa).

The protein belongs to the LamB/PxpA family. As to quaternary structure, forms a complex composed of PxpA, PxpB and PxpC.

The catalysed reaction is 5-oxo-L-proline + ATP + 2 H2O = L-glutamate + ADP + phosphate + H(+). Functionally, catalyzes the cleavage of 5-oxoproline to form L-glutamate coupled to the hydrolysis of ATP to ADP and inorganic phosphate. This chain is 5-oxoprolinase subunit A 2, found in Agrobacterium fabrum (strain C58 / ATCC 33970) (Agrobacterium tumefaciens (strain C58)).